The primary structure comprises 352 residues: Photosystem II D2 protein (352 aa).

A helical membrane pass occupies residues 40–60 (CAYMALGGWLTGTTFVTSWYT). Histidine 117 provides a ligand contact to chlorophyll a. The chain crosses the membrane as a helical span at residues 124–140 (GFMLRQFEIARLVGIRP). 2 residues coordinate pheophytin a: glutamine 129 and asparagine 142. Residues 152–165 (VFVSVFLMYPLGQS) form a helical membrane-spanning segment. Histidine 197 is a chlorophyll a binding site. A helical membrane pass occupies residues 207-227 (GALLCAIHGATVENTLFEDGD). Histidine 214 and phenylalanine 261 together coordinate a plastoquinone. Fe cation is bound at residue histidine 214. Histidine 268 contacts Fe cation. A helical transmembrane segment spans residues 278-294 (GLWTSSIGIIGLALNLR).

The protein belongs to the reaction center PufL/M/PsbA/D family. In terms of assembly, PSII is composed of 1 copy each of membrane proteins PsbA, PsbB, PsbC, PsbD, PsbE, PsbF, PsbH, PsbI, PsbJ, PsbK, PsbL, PsbM, PsbT, PsbX, PsbY, PsbZ, Psb30/Ycf12, peripheral proteins PsbO, CyanoQ (PsbQ), PsbU, PsbV and a large number of cofactors. It forms dimeric complexes. The cofactor is The D1/D2 heterodimer binds P680, chlorophylls that are the primary electron donor of PSII, and subsequent electron acceptors. It shares a non-heme iron and each subunit binds pheophytin, quinone, additional chlorophylls, carotenoids and lipids. There is also a Cl(-1) ion associated with D1 and D2, which is required for oxygen evolution. The PSII complex binds additional chlorophylls, carotenoids and specific lipids..

The protein localises to the cellular thylakoid membrane. It carries out the reaction 2 a plastoquinone + 4 hnu + 2 H2O = 2 a plastoquinol + O2. Functionally, photosystem II (PSII) is a light-driven water:plastoquinone oxidoreductase that uses light energy to abstract electrons from H(2)O, generating O(2) and a proton gradient subsequently used for ATP formation. It consists of a core antenna complex that captures photons, and an electron transfer chain that converts photonic excitation into a charge separation. The D1/D2 (PsbA/PsbD) reaction center heterodimer binds P680, the primary electron donor of PSII as well as several subsequent electron acceptors. D2 is needed for assembly of a stable PSII complex. The protein is Photosystem II D2 protein of Synechococcus sp. (strain RCC307).